A 304-amino-acid chain; its full sequence is N-acetylmuramic acid 6-phosphate etherase (304 aa).

Residues 62–225 enclose the SIS domain; the sequence is IVTAFRQGGR…TTASMILMGK (164 aa). Catalysis depends on Glu90, which acts as the Proton donor. Residue Glu121 is part of the active site.

The protein belongs to the GCKR-like family. MurNAc-6-P etherase subfamily. In terms of assembly, homodimer.

The enzyme catalyses N-acetyl-D-muramate 6-phosphate + H2O = N-acetyl-D-glucosamine 6-phosphate + (R)-lactate. Its pathway is amino-sugar metabolism; 1,6-anhydro-N-acetylmuramate degradation. It participates in amino-sugar metabolism; N-acetylmuramate degradation. It functions in the pathway cell wall biogenesis; peptidoglycan recycling. Functionally, specifically catalyzes the cleavage of the D-lactyl ether substituent of MurNAc 6-phosphate, producing GlcNAc 6-phosphate and D-lactate. Together with AnmK, is also required for the utilization of anhydro-N-acetylmuramic acid (anhMurNAc) either imported from the medium or derived from its own cell wall murein, and thus plays a role in cell wall recycling. This is N-acetylmuramic acid 6-phosphate etherase from Actinobacillus succinogenes (strain ATCC 55618 / DSM 22257 / CCUG 43843 / 130Z).